The primary structure comprises 309 residues: Sodium/potassium-transporting ATPase subunit beta-1 (309 aa).

Residues 1-45 (MSKNNGKGAKGEFEFPQPAKKQTFSEMIYNPQEGTFFGRTGKSWS) are Cytoplasmic-facing. Residues 46–66 (QLLLFYTIFYIVLAALFTICM) traverse the membrane as a helical; Signal-anchor for type II membrane protein segment. Over 67 to 309 (QGLLSTISDT…GSVTFQILLD (243 aa)) the chain is Extracellular. N-linked (GlcNAc...) asparagine glycosylation is present at Asn133. 2 disulfides stabilise this stretch: Cys143-Cys155 and Cys165-Cys179. The N-linked (GlcNAc...) asparagine glycan is linked to Asn211. Cys225 and Cys282 are oxidised to a cystine.

This sequence belongs to the X(+)/potassium ATPases subunit beta family. In terms of assembly, the sodium/potassium-transporting ATPase is composed of a catalytic alpha subunit, an auxiliary non-catalytic beta subunit and an additional regulatory subunit. Interacts with nkain. As to expression, in embryos, it is expressed in the neurons of the CNS and PNS, in Garland cells and posterior spiracles. In adults, it is concentrated in the thorax and abdomen (muscle tissue, digestive system and Malpighian tubules) and weakly expressed in the head. Expression is diffuse in the nervous system.

The protein resides in the cell membrane. Functionally, this is the non-catalytic component of the active enzyme, which catalyzes the hydrolysis of ATP coupled with the exchange of Na(+) and K(+) ions across the plasma membrane. The beta subunit regulates, through assembly of alpha/beta heterodimers, the number of sodium pumps transported to the plasma membrane. The chain is Sodium/potassium-transporting ATPase subunit beta-1 (nrv1) from Drosophila melanogaster (Fruit fly).